We begin with the raw amino-acid sequence, 94 residues long: NADH dehydrogenase [ubiquinone] iron-sulfur protein 3, mitochondrial (94 aa).

Belongs to the complex I 30 kDa subunit family. As to quaternary structure, core subunit of respiratory chain NADH dehydrogenase (Complex I) which is composed of 45 different subunits. Interacts with NDUFAF3. Interacts with RAB5IF. Found in subcomplexes containing subunits NDUFS2, MT-ND1 and NDUFA13.

Its subcellular location is the mitochondrion inner membrane. The enzyme catalyses a ubiquinone + NADH + 5 H(+)(in) = a ubiquinol + NAD(+) + 4 H(+)(out). Functionally, core subunit of the mitochondrial membrane respiratory chain NADH dehydrogenase (Complex I) which catalyzes electron transfer from NADH through the respiratory chain, using ubiquinone as an electron acceptor. Essential for the catalytic activity and assembly of complex I. This chain is NADH dehydrogenase [ubiquinone] iron-sulfur protein 3, mitochondrial, found in Mesocricetus auratus (Golden hamster).